An 879-amino-acid polypeptide reads, in one-letter code: Alanine--tRNA ligase (879 aa).

4 residues coordinate Zn(2+): H570, H574, C672, and H676.

Belongs to the class-II aminoacyl-tRNA synthetase family. Zn(2+) serves as cofactor.

The protein localises to the cytoplasm. The catalysed reaction is tRNA(Ala) + L-alanine + ATP = L-alanyl-tRNA(Ala) + AMP + diphosphate. In terms of biological role, catalyzes the attachment of alanine to tRNA(Ala) in a two-step reaction: alanine is first activated by ATP to form Ala-AMP and then transferred to the acceptor end of tRNA(Ala). Also edits incorrectly charged Ser-tRNA(Ala) and Gly-tRNA(Ala) via its editing domain. The sequence is that of Alanine--tRNA ligase from Nitratidesulfovibrio vulgaris (strain ATCC 29579 / DSM 644 / CCUG 34227 / NCIMB 8303 / VKM B-1760 / Hildenborough) (Desulfovibrio vulgaris).